Here is a 488-residue protein sequence, read N- to C-terminus: Ribulose bisphosphate carboxylase large chain (488 aa).

2 residues coordinate substrate: Asn127 and Thr177. Catalysis depends on Lys179, which acts as the Proton acceptor. Position 181 (Lys181) interacts with substrate. Mg(2+)-binding residues include Lys205, Asp207, and Glu208. Lys205 carries the post-translational modification N6-carboxylysine. His297 serves as the catalytic Proton acceptor. Positions 298, 330, and 382 each coordinate substrate.

Belongs to the RuBisCO large chain family. Type I subfamily. As to quaternary structure, heterohexadecamer of 8 large chains and 8 small chains. Requires Mg(2+) as cofactor.

It localises to the plastid. The protein localises to the chloroplast. The catalysed reaction is 2 (2R)-3-phosphoglycerate + 2 H(+) = D-ribulose 1,5-bisphosphate + CO2 + H2O. The enzyme catalyses D-ribulose 1,5-bisphosphate + O2 = 2-phosphoglycolate + (2R)-3-phosphoglycerate + 2 H(+). RuBisCO catalyzes two reactions: the carboxylation of D-ribulose 1,5-bisphosphate, the primary event in carbon dioxide fixation, as well as the oxidative fragmentation of the pentose substrate in the photorespiration process. Both reactions occur simultaneously and in competition at the same active site. The chain is Ribulose bisphosphate carboxylase large chain from Pylaiella littoralis (Seaweed).